We begin with the raw amino-acid sequence, 231 residues long: NifU-like protein 1, chloroplastic (231 aa).

A chloroplast-targeting transit peptide spans 1-69 (MMASLATSIS…SSQGEKISPL (69 aa)).

The protein belongs to the NifU family. As to quaternary structure, homodimer; disulfide-linked. Predominantly expressed in floral stalks and siliques. Expressed in leaves, cauline leaves, flower stalks and flowers (at protein level).

Its subcellular location is the plastid. It is found in the chloroplast stroma. Its function is as follows. Molecular scaffold for [Fe-S] cluster assembly of chloroplastic iron-sulfur proteins. This is NifU-like protein 1, chloroplastic (NIFU1) from Arabidopsis thaliana (Mouse-ear cress).